The following is a 98-amino-acid chain: Protein S100-A13 (98 aa).

The region spanning 18 to 53 is the EF-hand domain; that stretch reads TTFFTFAGREGRKGSLSVNEFKELVTQQLPHLLKDV. Residues Ser-32, Glu-37, Asp-64, Asn-66, Asp-68, Glu-70, and Glu-75 each contribute to the Ca(2+) site. At Ser-32 the chain carries Phosphoserine.

The protein belongs to the S-100 family. Homodimer. Part of a copper-dependent multiprotein complex containing S100A13, FGF1 and SYT1. Interacts with FGF1 and SYT1. Interacts with IL1A.

The protein localises to the cytoplasm. It is found in the secreted. Functionally, plays a role in the export of proteins that lack a signal peptide and are secreted by an alternative pathway. Binds two calcium ions per subunit. Binds one copper ion. Binding of one copper ion does not interfere with calcium binding. Required for the copper-dependent stress-induced export of IL1A and FGF1. The calcium-free protein binds to lipid vesicles containing phosphatidylserine, but not to vesicles containing phosphatidylcholine. This Bos taurus (Bovine) protein is Protein S100-A13 (S100A13).